Reading from the N-terminus, the 75-residue chain is Acyl carrier protein (75 aa).

Residues 1–75 (MIFEKVRDII…DVVEYLSNLE (75 aa)) form the Carrier domain. At Ser-35 the chain carries O-(pantetheine 4'-phosphoryl)serine.

It belongs to the acyl carrier protein (ACP) family. 4'-phosphopantetheine is transferred from CoA to a specific serine of apo-ACP by AcpS. This modification is essential for activity because fatty acids are bound in thioester linkage to the sulfhydryl of the prosthetic group.

The protein resides in the cytoplasm. It participates in lipid metabolism; fatty acid biosynthesis. Carrier of the growing fatty acid chain in fatty acid biosynthesis. The protein is Acyl carrier protein of Thermoanaerobacter pseudethanolicus (strain ATCC 33223 / 39E) (Clostridium thermohydrosulfuricum).